Reading from the N-terminus, the 332-residue chain is DNA-directed RNA polymerase subunit alpha (332 aa).

The interval Met-1–Glu-231 is alpha N-terminal domain (alpha-NTD). Residues Leu-262–Asn-332 are alpha C-terminal domain (alpha-CTD).

This sequence belongs to the RNA polymerase alpha chain family. As to quaternary structure, in plastids the minimal PEP RNA polymerase catalytic core is composed of four subunits: alpha, beta, beta', and beta''. When a (nuclear-encoded) sigma factor is associated with the core the holoenzyme is formed, which can initiate transcription.

The protein localises to the plastid. The enzyme catalyses RNA(n) + a ribonucleoside 5'-triphosphate = RNA(n+1) + diphosphate. Its function is as follows. DNA-dependent RNA polymerase catalyzes the transcription of DNA into RNA using the four ribonucleoside triphosphates as substrates. This Cuscuta japonica (Japanese dodder) protein is DNA-directed RNA polymerase subunit alpha.